Here is a 649-residue protein sequence, read N- to C-terminus: Acetyl-coenzyme A synthetase (649 aa).

Residues 190–193 (RGGR) and threonine 310 each bind CoA. Residues 386-388 (GEP), 410-415 (DTWWQT), aspartate 499, and arginine 514 each bind ATP. Serine 522 provides a ligand contact to CoA. Arginine 525 contacts ATP. Residues valine 536, histidine 538, and valine 541 each contribute to the Mg(2+) site. Arginine 583 provides a ligand contact to CoA. N6-acetyllysine is present on lysine 608.

Belongs to the ATP-dependent AMP-binding enzyme family. Mg(2+) is required as a cofactor. Acetylated. Deacetylation by the SIR2-homolog deacetylase activates the enzyme.

The catalysed reaction is acetate + ATP + CoA = acetyl-CoA + AMP + diphosphate. In terms of biological role, catalyzes the conversion of acetate into acetyl-CoA (AcCoA), an essential intermediate at the junction of anabolic and catabolic pathways. AcsA undergoes a two-step reaction. In the first half reaction, AcsA combines acetate with ATP to form acetyl-adenylate (AcAMP) intermediate. In the second half reaction, it can then transfer the acetyl group from AcAMP to the sulfhydryl group of CoA, forming the product AcCoA. This is Acetyl-coenzyme A synthetase from Methylorubrum populi (strain ATCC BAA-705 / NCIMB 13946 / BJ001) (Methylobacterium populi).